The primary structure comprises 720 residues: Dedicator of cytokinesis protein 9 (720 aa).

Residues Lys186–Cys638 enclose the DOCKER domain. Residues Asp277 to Cys638 form an interaction with CDC42 region.

This sequence belongs to the DOCK family. As to quaternary structure, homodimer. Interacts preferentially with nucleotide-depleted CDC42.

It localises to the endomembrane system. Guanine nucleotide-exchange factor (GEF) that activates CDC42 by exchanging bound GDP for free GTP. Overexpression induces filopodia formation. The chain is Dedicator of cytokinesis protein 9 (Dock9) from Rattus norvegicus (Rat).